Consider the following 908-residue polypeptide: Protein translocase subunit SecA (908 aa).

Residues glutamine 87, 105–109 (GEGKT), and aspartate 511 each bind ATP. Over residues 559–570 (ERHESRRIDNQL) the composition is skewed to basic and acidic residues. Disordered stretches follow at residues 559-582 (ERHE…DPGS) and 841-908 (RRRR…GRLE). The segment covering 847–856 (LAQQMQRAQA) has biased composition (low complexity). Residues 862–873 (TEEDSDAEEQAE) show a composition bias toward acidic residues. Zn(2+)-binding residues include cysteine 892, cysteine 894, cysteine 903, and histidine 904. A compositionally biased stretch (basic residues) spans 898–908 (KKYKQCHGRLE).

Belongs to the SecA family. In terms of assembly, monomer and homodimer. Part of the essential Sec protein translocation apparatus which comprises SecA, SecYEG and auxiliary proteins SecDF-YajC and YidC. Zn(2+) is required as a cofactor.

The protein resides in the cell inner membrane. It localises to the cytoplasm. It catalyses the reaction ATP + H2O + cellular proteinSide 1 = ADP + phosphate + cellular proteinSide 2.. Functionally, part of the Sec protein translocase complex. Interacts with the SecYEG preprotein conducting channel. Has a central role in coupling the hydrolysis of ATP to the transfer of proteins into and across the cell membrane, serving both as a receptor for the preprotein-SecB complex and as an ATP-driven molecular motor driving the stepwise translocation of polypeptide chains across the membrane. This Hahella chejuensis (strain KCTC 2396) protein is Protein translocase subunit SecA.